Consider the following 1021-residue polypeptide: Immunoglobulin superfamily member 2 (1021 aa).

The signal sequence occupies residues 1–20 (MAGISYVASFFLLLTKLSIG). The Extracellular portion of the chain corresponds to 21–954 (QREVTVQKGP…LPSRICSSAP (934 aa)). Ig-like C2-type domains are found at residues 22 to 139 (REVT…AKTN), 144 to 265 (PDTL…WMFI), 279 to 389 (PAVK…RTGS), 408 to 525 (PAAR…RDLS), 541 to 651 (LQVS…NSLY), 656 to 794 (PRAS…WHKL), and 808 to 925 (PTGS…KWIN). Disulfide bonds link Cys-43-Cys-121 and Cys-168-Cys-249. A glycan (N-linked (GlcNAc...) asparagine) is linked at Asn-44. Positions 253 to 255 (EWI) match the EWI motif motif. 5 disulfide bridges follow: Cys-304/Cys-377, Cys-434/Cys-511, Cys-562/Cys-640, Cys-697/Cys-778, and Cys-834/Cys-909. N-linked (GlcNAc...) asparagine glycosylation is present at Asn-322. A helical membrane pass occupies residues 955–975 (LLYFLFICPFVLLLLLLISLL). The Cytoplasmic segment spans residues 976–1021 (CLYWKARKLSTLRSNTRKEKALWVDLKEAGGVTTNRREDEEEDEGN).

N-glycosylated. Expressed in lung, thymus and small intestine. Detected in cutaneous dendritic cells, activated T-cells, monocytes and granulocytes as well as with epithelial cells with dendritic morphology. Expressed in some leukemic cells, the CD4(+) CD56(+) blastic tumor cells, as well as in Langerhans cells from LCH (Langerhans cell histiocytosis) patients.

It localises to the membrane. Functionally, plays a role as inhibitor of T-cells proliferation induced by CD3. Inhibits expression of IL2RA on activated T-cells and secretion of IL2. Inhibits tyrosine kinases that are required for IL2 production and cellular proliferation. Inhibits phospholipase C-gamma-1/PLCG1 phosphorylation and subsequent CD3-induced changes in intracellular free calcium. Prevents nuclear translocation of nuclear factor of activated T-cell to the nucleus. Plays a role in the inhibition of T-cell proliferation via IL10 secretion by cutaneous dendritic cells. May be a marker of CD4(+) CD56(+) leukemic tumor cells. This is Immunoglobulin superfamily member 2 (CD101) from Homo sapiens (Human).